The sequence spans 639 residues: CTTNBP2 N-terminal-like protein (639 aa).

Residues 87–285 (MKQCKNMQER…DLEASHQHSS (199 aa)) adopt a coiled-coil conformation. Ser-284 and Ser-285 each carry phosphoserine. Disordered stretches follow at residues 387–430 (VENG…PCSS), 463–490 (RHKF…LSPT), and 511–609 (RFTS…AASL). Composition is skewed to low complexity over residues 405 to 430 (PLSS…PCSS) and 467 to 477 (QSQADQDQQAS). 7 positions are modified to phosphoserine: Ser-481, Ser-488, Ser-523, Ser-527, Ser-560, Ser-563, and Ser-568. A compositionally biased stretch (polar residues) spans 511 to 529 (RFTSQQGPIKPVSPNSSPF). A phosphothreonine mark is found at Thr-570 and Thr-590. Over residues 587–600 (PGLTPSPSATTPLT) the composition is skewed to low complexity. The residue at position 592 (Ser-592) is a Phosphoserine.

As to quaternary structure, interacts with CTTN/cortactin; this interaction may redistribute CTTN to stress fibers. May form homomers. Associates with the core of STRIPAK complexes composed of PP2A catalytic and scaffolding subunits, the striatins (PP2A regulatory subunits), the striatin-associated proteins MOB4, STRIP1 and STRIP2, PDCD10 and members of the STE20 kinases, such as STK24 and STK26.

The protein localises to the cell projection. It is found in the lamellipodium. The protein resides in the cytoplasm. It localises to the cytoskeleton. Its subcellular location is the stress fiber. In terms of biological role, regulates lamellipodial actin dynamics in a CTTN-dependent manner. Associates with core striatin-interacting phosphatase and kinase (STRIPAK) complex to form CTTNBP2NL-STRIPAK complexes. STRIPAK complexes have critical roles in protein (de)phosphorylation and are regulators of multiple signaling pathways including Hippo, MAPK, nuclear receptor and cytoskeleton remodeling. Different types of STRIPAK complexes are involved in a variety of biological processes such as cell growth, differentiation, apoptosis, metabolism and immune regulation. This chain is CTTNBP2 N-terminal-like protein, found in Homo sapiens (Human).